Here is a 126-residue protein sequence, read N- to C-terminus: UPF0235 protein C15orf40 homolog (126 aa).

Positions 1–33 (MPKKAGATSKGKNQTKEPETPPPPTGPVATDSK) are disordered. S89 is subject to Phosphoserine.

This sequence belongs to the UPF0235 family.

This is UPF0235 protein C15orf40 homolog from Rattus norvegicus (Rat).